Reading from the N-terminus, the 68-residue chain is Negative regulator of P-body association (68 aa).

The disordered stretch occupies residues 1–68 (MGDQPCASGR…LKSHPPPPEK (68 aa)).

As to quaternary structure, interacts with mRNA decapping proteins DCP1A, DCP2 and EDC4.

It is found in the cytoplasm. The protein resides in the P-body. Functionally, promotes dispersal of P-body components and is likely to play a role in the mRNA decapping process. The chain is Negative regulator of P-body association from Homo sapiens (Human).